We begin with the raw amino-acid sequence, 446 residues long: MQPEHVAGANMPNAVGNHDPMMRQTVTVILAGGRGSRLEPLTRDRAKPAVPIGGAYRIIDFVLSNCLNSDMRRLLLLTQYKAQSLDRHINVAWRNYFCRELGEFIDVVPPQQRIDDNWYQGTADAVYQNIYAIEREAPEYVVILAGDHLYKMNYESMVNFHHRKGADVTVGALRVSREEARQFGVMQVDTDNRLVEFQEKPENPRPTLDDPDVCLASMGIYVFNTRFLFERLCDDATQPDSDHDFGKNIIPGAIEDSQVFAFPFTDENRKRDAYWRDVGTLEAYYEANMDLVGVDPQLNLYDRQWPIRSFQPQLPPPKFVFGSEGRSSRRGEALDSIVCQGAIISGGCVRRSVIGTGCRINSYAQVEDSILFDDVNVGRHSRIRRAIIDKGVQIPPETEIGYDLALDRARGLTVTDSGLVVIARGEMIASPVSTNGSHDPTSSLTS.

Residues Y119, G184, 199–200 (EK), and S217 contribute to the alpha-D-glucose 1-phosphate site.

Belongs to the bacterial/plant glucose-1-phosphate adenylyltransferase family. As to quaternary structure, homotetramer.

It catalyses the reaction alpha-D-glucose 1-phosphate + ATP + H(+) = ADP-alpha-D-glucose + diphosphate. It functions in the pathway glycan biosynthesis; glycogen biosynthesis. Involved in the biosynthesis of ADP-glucose, a building block required for the elongation reactions to produce glycogen. Catalyzes the reaction between ATP and alpha-D-glucose 1-phosphate (G1P) to produce pyrophosphate and ADP-Glc. The sequence is that of Glucose-1-phosphate adenylyltransferase from Rhodopirellula baltica (strain DSM 10527 / NCIMB 13988 / SH1).